A 174-amino-acid polypeptide reads, in one-letter code: Glutaredoxin-C5, chloroplastic (174 aa).

The transit peptide at 1 to 51 directs the protein to the chloroplast; that stretch reads MAVTAFNTLKLVSSSLDPIPSVSCSSYSFSLIYVGSPYKRCLKQSCSVRAM. An N-acetylthreonine modification is found at T52. C90 is modified (S-glutathionyl cysteine; partial). A disulfide bridge links C90 with C93. Residues 93 to 171 form the Glutaredoxin domain; that stretch reads CTEVKTLFKR…LMLAEANGKN (79 aa). Glutathione-binding residues include V135, C148, and T149. At C148 the chain carries S-glutathionyl cysteine; partial.

This sequence belongs to the glutaredoxin family. CPYC subfamily. As to quaternary structure, monomeric apoprotein and homodimeric holoprotein containing a [2Fe-2S] cluster. No in vitro interactions with SUFE1, BOLA1, BOLA2 or BOLA4. In terms of processing, glutathionylated.

The protein resides in the plastid. It is found in the chloroplast. Has a glutathione-disulfide oxidoreductase activity in the presence of NADPH and glutathione reductase. Reduces low molecular weight disulfides and proteins. Can assemble a [2Fe-2S] cluster, but cannot transfer it to an apoferredoxin. The polypeptide is Glutaredoxin-C5, chloroplastic (Arabidopsis thaliana (Mouse-ear cress)).